Here is a 161-residue protein sequence, read N- to C-terminus: GTP-dependent dephospho-CoA kinase (161 aa).

6 residues coordinate GTP: Asp40, Val41, Val42, Asp59, Glu112, and Glu135.

The protein belongs to the GTP-dependent DPCK family.

It catalyses the reaction 3'-dephospho-CoA + GTP = GDP + CoA + H(+). The protein operates within cofactor biosynthesis; coenzyme A biosynthesis. Functionally, catalyzes the GTP-dependent phosphorylation of the 3'-hydroxyl group of dephosphocoenzyme A to form coenzyme A (CoA). The chain is GTP-dependent dephospho-CoA kinase from Methanocorpusculum labreanum (strain ATCC 43576 / DSM 4855 / Z).